Here is a 520-residue protein sequence, read N- to C-terminus: F-box/LRR-repeat protein At3g59200 (520 aa).

The region spanning R6–S54 is the F-box domain. 3 LRR repeats span residues C170–N197, F219–D244, and N340–R365.

This is F-box/LRR-repeat protein At3g59200 from Arabidopsis thaliana (Mouse-ear cress).